Reading from the N-terminus, the 311-residue chain is Ornithine carbamoyltransferase (311 aa).

Carbamoyl phosphate-binding positions include 54-57 (STRT), Q81, R105, and 132-135 (HPCQ). Residues N164, D228, and 232–233 (SM) each bind L-ornithine. Carbamoyl phosphate contacts are provided by residues 268–269 (CL) and R296.

This sequence belongs to the aspartate/ornithine carbamoyltransferase superfamily. OTCase family.

Its subcellular location is the cytoplasm. The catalysed reaction is carbamoyl phosphate + L-ornithine = L-citrulline + phosphate + H(+). The protein operates within amino-acid biosynthesis; L-arginine biosynthesis; L-arginine from L-ornithine and carbamoyl phosphate: step 1/3. Its function is as follows. Reversibly catalyzes the transfer of the carbamoyl group from carbamoyl phosphate (CP) to the N(epsilon) atom of ornithine (ORN) to produce L-citrulline. The polypeptide is Ornithine carbamoyltransferase (Renibacterium salmoninarum (strain ATCC 33209 / DSM 20767 / JCM 11484 / NBRC 15589 / NCIMB 2235)).